The sequence spans 251 residues: Azurocidin (251 aa).

The first 19 residues, 1–19 (MTRLTVLALLAGLLASSRA), serve as a signal peptide directing secretion. Residues 20 to 26 (GSSPLLD) constitute a propeptide, removed in mature form. Positions 25-26 (LD) are cleaved as a propeptide — dipeptide found in non-mature form. Positions 27 to 244 (IVGGRKARPR…FRDWIDGVLN (218 aa)) constitute a Peptidase S1 domain. Residues 46 to 70 (NQGRHFCGGALIHARFVMTAASCFQ) are possesses antibiotic activity. A disulfide bridge connects residues Cys52 and Cys68. A glycan (N-linked (GlcNAc...) asparagine; partial) is linked at Asn126. Asn140 carries an N-linked (GlcNAc...) asparagine glycan. 3 cysteine pairs are disulfide-bonded: Cys149–Cys207, Cys180–Cys186, and Cys197–Cys222. Asn171 is a glycosylation site (N-linked (GlcNAc...) asparagine; partial). Positions 249-251 (GPA) are cleaved as a propeptide — removed in mature form.

The protein belongs to the peptidase S1 family. Elastase subfamily. In terms of processing, cleavage of the N-terminal propeptide which is composed of 7 amino acids occurs in two steps. The initial cleavage of 5 amino acids is followed by the cleavage of a dipeptide to produce the mature form.

The protein resides in the cytoplasmic granule membrane. This is a neutrophil granule-derived antibacterial and monocyte- and fibroblast-specific chemotactic glycoprotein. Binds heparin. The cytotoxic action is limited to many species of Gram-negative bacteria; this specificity may be explained by a strong affinity of the very basic N-terminal half for the negatively charged lipopolysaccharides that are unique to the Gram-negative bacterial outer envelope. It may play a role in mediating recruitment of monocytes in the second wave of inflammation. Has antibacterial activity against the Gram-negative bacterium P.aeruginosa, this activity is inhibited by LPS from P.aeruginosa. Acting alone, it does not have antimicrobial activity against the Gram-negative bacteria A.actinomycetemcomitans ATCC 29532, A.actinomycetemcomitans NCTC 9709, A.actinomycetemcomitans FDC-Y4, H.aphrophilus ATCC 13252, E.corrodens ATCC 23834, C.sputigena ATCC 33123, Capnocytophaga sp ATCC 33124, Capnocytophaga sp ATCC 27872 or E.coli ML-35. Has antibacterial activity against C.sputigena ATCC 33123 when acting synergistically with either elastase or cathepsin G. The polypeptide is Azurocidin (Homo sapiens (Human)).